Here is a 402-residue protein sequence, read N- to C-terminus: NADH-quinone oxidoreductase subunit D (402 aa).

It belongs to the complex I 49 kDa subunit family. As to quaternary structure, NDH-1 is composed of 14 different subunits. Subunits NuoB, C, D, E, F, and G constitute the peripheral sector of the complex.

It localises to the cell inner membrane. It carries out the reaction a quinone + NADH + 5 H(+)(in) = a quinol + NAD(+) + 4 H(+)(out). Its function is as follows. NDH-1 shuttles electrons from NADH, via FMN and iron-sulfur (Fe-S) centers, to quinones in the respiratory chain. The immediate electron acceptor for the enzyme in this species is believed to be ubiquinone. Couples the redox reaction to proton translocation (for every two electrons transferred, four hydrogen ions are translocated across the cytoplasmic membrane), and thus conserves the redox energy in a proton gradient. The polypeptide is NADH-quinone oxidoreductase subunit D (Xanthobacter autotrophicus (strain ATCC BAA-1158 / Py2)).